Consider the following 307-residue polypeptide: Transcription initiation factor IIF subunit beta (307 aa).

Basic and acidic residues predominate over residues 1–12 (MSEEKPTVRTEE). Disordered regions lie at residues 1-22 (MSEE…DAGD) and 261-307 (VELR…IDVV). Positions 13-22 (DDRYEDDAGD) are enriched in acidic residues. Over residues 263–290 (LRNQQASQSESSSIDHTGKNTSPDNPGT) the composition is skewed to polar residues. Residues 292-307 (AEEDEDDDGVEMIDVV) are compositionally biased toward acidic residues.

Belongs to the TFIIF beta subunit family. Component of the fcp1/TFIIF/polII complex via interaction of tfg3 with both tfg1/TFIIF-alpha and tfg2/TFIIF-beta subunits.

The protein resides in the nucleus. TFIIF is a general transcription initiation factor that binds to RNA polymerase II and helps to recruit it to the initiation complex in collaboration with TFIIB. It promotes transcription elongation. The protein is Transcription initiation factor IIF subunit beta (tfg2) of Schizosaccharomyces pombe (strain 972 / ATCC 24843) (Fission yeast).